Consider the following 277-residue polypeptide: Diaminopimelate epimerase (277 aa).

3 residues coordinate substrate: N13, Q46, and N66. The active-site Proton donor is C75. Residues 76–77 (GN), N159, N192, and 210–211 (ER) each bind substrate. The Proton acceptor role is filled by C219. A substrate-binding site is contributed by 220–221 (GT).

This sequence belongs to the diaminopimelate epimerase family. In terms of assembly, homodimer.

It is found in the cytoplasm. It carries out the reaction (2S,6S)-2,6-diaminopimelate = meso-2,6-diaminopimelate. It participates in amino-acid biosynthesis; L-lysine biosynthesis via DAP pathway; DL-2,6-diaminopimelate from LL-2,6-diaminopimelate: step 1/1. Its function is as follows. Catalyzes the stereoinversion of LL-2,6-diaminopimelate (L,L-DAP) to meso-diaminopimelate (meso-DAP), a precursor of L-lysine and an essential component of the bacterial peptidoglycan. The chain is Diaminopimelate epimerase from Aromatoleum aromaticum (strain DSM 19018 / LMG 30748 / EbN1) (Azoarcus sp. (strain EbN1)).